The following is a 141-amino-acid chain: Large ribosomal subunit protein uL11 (141 aa).

It belongs to the universal ribosomal protein uL11 family. In terms of assembly, part of the ribosomal stalk of the 50S ribosomal subunit. Interacts with L10 and the large rRNA to form the base of the stalk. L10 forms an elongated spine to which L12 dimers bind in a sequential fashion forming a multimeric L10(L12)X complex. Post-translationally, one or more lysine residues are methylated.

Its function is as follows. Forms part of the ribosomal stalk which helps the ribosome interact with GTP-bound translation factors. In Roseiflexus castenholzii (strain DSM 13941 / HLO8), this protein is Large ribosomal subunit protein uL11.